The chain runs to 419 residues: Protein FAM181B (419 aa).

The interval 107 to 157 (LMGAAPPGPSSPGAADTPAKRPLAGAQTVPVPVPAHGKAAPRREASQAAAA) is disordered.

It belongs to the FAM181 family.

The protein is Protein FAM181B (FAM181B) of Bos taurus (Bovine).